The sequence spans 324 residues: Bacilliredoxin reductase Bdr (324 aa).

Cysteine 220 is subject to S-bacillithiol cysteine disulfide.

As to quaternary structure, interacts with BrxC. The cofactor is FAD. Post-translationally, C-terminal Cys can react with bacillithiol (BSH) to form mixed disulfides. S-bacillithiolation protects Cys residues against overoxidation by acting as a redox switch in response to oxidative stress.

S-bacillithiolation is the formation of mixed disulfide bonds between protein thiols and the general thiol reductant bacillithiol (BSH) under oxidative stress. BSH is an equivalent of glutathione (GSH) in Firmicutes. This protein is a NADPH-dependent bacilliredoxin reductase, which debacillithiolates (removes BSH) the S-bacillithiolated BrxB (BrxB-SSB), and to a lesser extent BrxC (BrxC-SSB). Involved in a redox cascade increasing the efficacy of BrxB function by reducing BrxB-SSB and thus reactivating it. Has NADPH-dependent oxidase activity under aerobic conditions producing hydrogen peroxide (H(2)O(2)). The protein is Bacilliredoxin reductase Bdr of Bacillus subtilis (strain 168).